We begin with the raw amino-acid sequence, 297 residues long: Probable endonuclease 4 (297 aa).

Residues histidine 69, histidine 110, glutamate 145, aspartate 179, histidine 182, histidine 214, aspartate 227, histidine 229, and glutamate 259 each coordinate Zn(2+).

This sequence belongs to the AP endonuclease 2 family. The cofactor is Zn(2+).

It catalyses the reaction Endonucleolytic cleavage to 5'-phosphooligonucleotide end-products.. Its function is as follows. Endonuclease IV plays a role in DNA repair. It cleaves phosphodiester bonds at apurinic or apyrimidinic (AP) sites, generating a 3'-hydroxyl group and a 5'-terminal sugar phosphate. The polypeptide is Probable endonuclease 4 (Listeria innocua serovar 6a (strain ATCC BAA-680 / CLIP 11262)).